Reading from the N-terminus, the 560-residue chain is Putative transport protein VIBHAR_02636 (560 aa).

Helical transmembrane passes span 8-28 (LLEQ…LAFG), 37-57 (LGNS…GFSF), 66-86 (FMLF…GIFF), 91-111 (HYFI…YFCS), and 164-184 (VGYA…AKLL). RCK C-terminal domains lie at 205-292 (LGNS…FRNG) and 293-376 (KEVF…KIGF). The next 6 helical transmembrane spans lie at 386–406 (LLAF…TMTF), 409–429 (VSFS…LGFL), 450–470 (LGLM…IFEH), 478–498 (IIGL…LVGA), 505–525 (SALL…MDVV), and 539–559 (AGTY…LIIL).

It belongs to the AAE transporter (TC 2.A.81) family. YbjL subfamily.

It localises to the cell membrane. This is Putative transport protein VIBHAR_02636 from Vibrio campbellii (strain ATCC BAA-1116).